We begin with the raw amino-acid sequence, 315 residues long: MSKKVMGLLVMAYGTPYKEEDLERYYTHIRHGRKPSEEMLADLRERYEAIGGISPLAAITKQQAEKLAERLNEVQDEIEFRMYLGLKHIEPFVEDAVQQMHEDGIEEAVSIVLAPHFSTFSVKSYNGRAKEEAARLGGPKLTCVESWYTEPKFIQYWADRVKETYASMSEREREKAVLIVSAHSLPEKIIAMGDPYPKQLQETADFIAKEAGVSEYVIGWQSAGNTPEPWLGPDVQDLTRQLYEEKGYEAFVYVPAGFVSDHLEVLYDNDIECKQVTDELGVSYYRPPMPNAHPQFIDALATVVLNHLRKEGESL.

Fe-coproporphyrin III contacts are provided by residues tyrosine 13, arginine 30, arginine 46 to tyrosine 47, serine 54, and tyrosine 125. Fe(2+)-binding residues include histidine 183 and glutamate 264.

This sequence belongs to the ferrochelatase family.

The protein resides in the cytoplasm. It catalyses the reaction Fe-coproporphyrin III + 2 H(+) = coproporphyrin III + Fe(2+). The protein operates within porphyrin-containing compound metabolism; protoheme biosynthesis. Its function is as follows. Involved in coproporphyrin-dependent heme b biosynthesis. Catalyzes the insertion of ferrous iron into coproporphyrin III to form Fe-coproporphyrin III. This is Coproporphyrin III ferrochelatase from Anoxybacillus flavithermus (strain DSM 21510 / WK1).